A 389-amino-acid polypeptide reads, in one-letter code: Cytochrome B translational activator CBS2 (389 aa).

The protein resides in the mitochondrion. Its function is as follows. Translational activator of cytochrome b. The cytochrome b (coB) leader RNA may represent the target sequence for CBS1 and/ or CBS2. This is Cytochrome B translational activator CBS2 (CBS2) from Saccharomyces cerevisiae (strain ATCC 204508 / S288c) (Baker's yeast).